We begin with the raw amino-acid sequence, 370 residues long: A-type ATP synthase subunit C (370 aa).

Belongs to the V-ATPase V0D/AC39 subunit family. As to quaternary structure, has multiple subunits with at least A(3), B(3), C, D, E, F, H, I and proteolipid K(x).

It localises to the cell membrane. Functionally, component of the A-type ATP synthase that produces ATP from ADP in the presence of a proton gradient across the membrane. This is A-type ATP synthase subunit C from Pyrococcus abyssi (strain GE5 / Orsay).